The sequence spans 228 residues: Triosephosphate isomerase (228 aa).

11–13 (NFK) contacts substrate. Residue histidine 95 is the Electrophile of the active site. Glutamate 143 (proton acceptor) is an active-site residue. Substrate-binding positions include isoleucine 148, glycine 183, and 204-205 (AS).

This sequence belongs to the triosephosphate isomerase family. Homotetramer; dimer of dimers.

The protein localises to the cytoplasm. It carries out the reaction D-glyceraldehyde 3-phosphate = dihydroxyacetone phosphate. The protein operates within carbohydrate biosynthesis; gluconeogenesis. It participates in carbohydrate degradation; glycolysis; D-glyceraldehyde 3-phosphate from glycerone phosphate: step 1/1. Functionally, involved in the gluconeogenesis. Catalyzes stereospecifically the conversion of dihydroxyacetone phosphate (DHAP) to D-glyceraldehyde-3-phosphate (G3P). This Pyrococcus abyssi (strain GE5 / Orsay) protein is Triosephosphate isomerase.